We begin with the raw amino-acid sequence, 266 residues long: 3-methyl-2-oxobutanoate hydroxymethyltransferase (266 aa).

The Mg(2+) site is built by Asp45 and Asp84. Residues 45-46, Asp84, and Lys112 each bind 3-methyl-2-oxobutanoate; that span reads DS. Residue Glu114 coordinates Mg(2+). Residue Glu181 is the Proton acceptor of the active site.

It belongs to the PanB family. Homodecamer; pentamer of dimers. Requires Mg(2+) as cofactor.

The protein resides in the cytoplasm. The catalysed reaction is 3-methyl-2-oxobutanoate + (6R)-5,10-methylene-5,6,7,8-tetrahydrofolate + H2O = 2-dehydropantoate + (6S)-5,6,7,8-tetrahydrofolate. It participates in cofactor biosynthesis; (R)-pantothenate biosynthesis; (R)-pantoate from 3-methyl-2-oxobutanoate: step 1/2. In terms of biological role, catalyzes the reversible reaction in which hydroxymethyl group from 5,10-methylenetetrahydrofolate is transferred onto alpha-ketoisovalerate to form ketopantoate. The polypeptide is 3-methyl-2-oxobutanoate hydroxymethyltransferase (Pseudomonas putida (strain ATCC 700007 / DSM 6899 / JCM 31910 / BCRC 17059 / LMG 24140 / F1)).